Consider the following 607-residue polypeptide: Branchpoint-bridging protein (607 aa).

2 stretches are compositionally biased toward polar residues: residues Met-1–Pro-15 and Val-35–Asn-45. Disordered stretches follow at residues Met-1–Lys-92 and Val-134–Val-155. Residues Gly-46–Pro-76 are compositionally biased toward basic and acidic residues. Positions Tyr-201–Ile-281 constitute a KH domain. 2 consecutive CCHC-type zinc fingers follow at residues Gln-319–Glu-336 and Ile-344–Asp-361. 2 disordered regions span residues Gln-363–Ala-390 and Ala-407–Ala-607. The span at Pro-373–Asp-389 shows a compositional bias: gly residues. Positions Ala-472–Gly-500 are enriched in basic and acidic residues. Over residues Ser-521–Gly-533 the composition is skewed to low complexity. Residues Ala-534–Pro-545 are compositionally biased toward gly residues. 2 stretches are compositionally biased toward pro residues: residues Ala-550–Pro-563 and Ala-581–Ala-607.

This sequence belongs to the BBP/SF1 family.

It is found in the nucleus. In terms of biological role, necessary for the splicing of pre-mRNA. Has a role in the recognition of the branch site (5'-UACUAAC-3'), the pyrimidine tract and the 3'-splice site at the 3'-end of introns. This is Branchpoint-bridging protein (bbp-1) from Neurospora crassa (strain ATCC 24698 / 74-OR23-1A / CBS 708.71 / DSM 1257 / FGSC 987).